A 132-amino-acid chain; its full sequence is Small ribosomal subunit protein uS8 (132 aa).

It belongs to the universal ribosomal protein uS8 family. Part of the 30S ribosomal subunit. Contacts proteins S5 and S12.

Functionally, one of the primary rRNA binding proteins, it binds directly to 16S rRNA central domain where it helps coordinate assembly of the platform of the 30S subunit. The polypeptide is Small ribosomal subunit protein uS8 (Gluconacetobacter diazotrophicus (strain ATCC 49037 / DSM 5601 / CCUG 37298 / CIP 103539 / LMG 7603 / PAl5)).